A 224-amino-acid polypeptide reads, in one-letter code: Golgi to ER traffic protein 1 (224 aa).

At 1–33 the chain is on the lumenal side; the sequence is MDEAIIVDAEFVAPVGTTAGEFVPIDRAPAAGL. Residues 34 to 53 traverse the membrane as a helical segment; that stretch reads LLLVAFVVLYAKVISKLGKP. Residues 54 to 137 are Cytoplasmic-facing; the sequence is AIQEFLWEII…RFFTIISSAI (84 aa). The stretch at 102–124 forms a coiled coil; it reads AKLDREYGKLKVEIEDINNLLTA. Residues 138 to 158 form a helical membrane-spanning segment; the sequence is FLSTTGMKMFLRIKHRKAAIF. At 159 to 182 the chain is on the lumenal side; it reads WLPKNAFPYPIEYILSFSSAPLGS. A helical transmembrane segment spans residues 183-199; the sequence is VSVSAWLMICDAAMDLI. The Cytoplasmic segment spans residues 200–224; sequence VTIFVALVVGVIGMLRSNKVKPKTA.

The protein belongs to the WRB/GET1 family. As to quaternary structure, component of the Golgi to ER traffic (GET) complex, which is composed of GET1, GET2 and GET3. Within the complex, GET1 and GET2 form a heterotetramer which is stabilized by phosphatidylinositol binding and which binds to the GET3 homodimer.

It localises to the endoplasmic reticulum membrane. It is found in the golgi apparatus membrane. Required for the post-translational delivery of tail-anchored (TA) proteins to the endoplasmic reticulum. Together with GET2, acts as a membrane receptor for soluble GET3, which recognizes and selectively binds the transmembrane domain of TA proteins in the cytosol. The GET complex cooperates with the HDEL receptor ERD2 to mediate the ATP-dependent retrieval of resident ER proteins that contain a C-terminal H-D-E-L retention signal from the Golgi to the ER. This is Golgi to ER traffic protein 1 from Yarrowia lipolytica (strain CLIB 122 / E 150) (Yeast).